The primary structure comprises 911 residues: Protein transport protein SEC24-1 (911 aa).

A compositionally biased stretch (low complexity) spans 108 to 123 (QPLPQQQQQQQQQQGP). The segment at 108-130 (QPLPQQQQQQQQQQGPAKPPKPM) is disordered. Zn(2+)-binding residues include Cys226, Cys229, Cys248, and Cys251. Positions 226-251 (CRRCRSYMNPFVHFNQDGRRWKCNIC) are zinc finger-like.

It belongs to the SEC23/SEC24 family. SEC24 subfamily. As to quaternary structure, the COPII coat is composed of at least 5 proteins: the SEC23/24 complex, the SEC13/31 complex, and the protein SAR1. Golgi apparatus membrane; Peripheral membrane protein; Cytoplasmic side.

It is found in the cytoplasm. Its subcellular location is the cytoplasmic vesicle. The protein resides in the COPII-coated vesicle membrane. It localises to the endoplasmic reticulum membrane. The protein localises to the golgi apparatus membrane. In terms of biological role, component of the coat protein complex II (COPII) which promotes the formation of transport vesicles from the endoplasmic reticulum (ER). The coat has two main functions, the physical deformation of the endoplasmic reticulum membrane into vesicles and the selection of cargo molecules. The sequence is that of Protein transport protein SEC24-1 (SEC241) from Naumovozyma castellii (Yeast).